The chain runs to 155 residues: Transcription antitermination protein NusB (155 aa).

This sequence belongs to the NusB family.

In terms of biological role, involved in transcription antitermination. Required for transcription of ribosomal RNA (rRNA) genes. Binds specifically to the boxA antiterminator sequence of the ribosomal RNA (rrn) operons. In Vibrio parahaemolyticus serotype O3:K6 (strain RIMD 2210633), this protein is Transcription antitermination protein NusB.